Consider the following 416-residue polypeptide: Succinate--CoA ligase [ADP-forming] subunit beta (416 aa).

Residues 1-14 (MLRMAPKTVGAVRN) constitute a hydrogenosome transit peptide. ATP-binding positions include Lys64, 71-73 (GRG), and Glu132. The Mg(2+) site is built by Asn224 and Asp242. Substrate is bound by residues Asn293 and 350–352 (GIM).

Belongs to the succinate/malate CoA ligase beta subunit family. As to quaternary structure, heterodimer of an alpha and a beta subunit. Mg(2+) is required as a cofactor.

Its subcellular location is the hydrogenosome. It catalyses the reaction succinate + ATP + CoA = succinyl-CoA + ADP + phosphate. It participates in carbohydrate metabolism; tricarboxylic acid cycle; succinate from succinyl-CoA (ligase route): step 1/1. Its function is as follows. Succinyl-CoA synthetase functions in the citric acid cycle (TCA), coupling the hydrolysis of succinyl-CoA to the synthesis of ATP and thus represents the only step of substrate-level phosphorylation in the TCA. The beta subunit provides nucleotide specificity of the enzyme and binds the substrate succinate, while the binding sites for coenzyme A and phosphate are found in the alpha subunit. The protein is Succinate--CoA ligase [ADP-forming] subunit beta (SCSb) of Blastocystis sp. subtype 1 (strain ATCC 50177 / NandII).